A 217-amino-acid polypeptide reads, in one-letter code: CD99 antigen-like protein 2 (217 aa).

The N-terminal stretch at 1–25 (MVAWRWACLICLAFSLTTLVQRGSG) is a signal peptide. Over 26 to 141 (DTGGFRLEDA…DDSGMSAETG (116 aa)) the chain is Extracellular. The interval 36-136 (VEGTSSVKQR…GGDNSDDSGM (101 aa)) is disordered. Low complexity predominate over residues 50-64 (TTTTRRPGATRAPAK). Over residues 70 to 82 (AEDDFNLADALDD) the composition is skewed to acidic residues. The span at 83-92 (QNDRDHDRKK) shows a compositional bias: basic and acidic residues. A glycan (O-linked (Xyl...) (chondroitin sulfate) serine) is linked at Ser134. The chain crosses the membrane as a helical span at residues 142 to 162 (TIAGVASALAMALIGAVSSYI). At 163-217 (SYQQKKFCFSIQQGLNADYVKGENLEAVVCEEPQVKYSALQTQSTEPPPPEPPRI) the chain is on the cytoplasmic side.

It belongs to the CD99 family. O-glycosylated.

It is found in the cell membrane. The protein localises to the cell junction. It localises to the secreted. Plays a role in a late step of leukocyte extravasation helping cells to overcome the endothelial basement membrane. Acts at the same site as, but independently of, PECAM1. Homophilic adhesion molecule, but these interactions may not be required for cell aggregation. The chain is CD99 antigen-like protein 2 (CD99L2) from Bos taurus (Bovine).